The primary structure comprises 85 residues: Toxin BmKaTx10 (85 aa).

The N-terminal stretch at 1–19 is a signal peptide; it reads MNYLVMVSFALLLMTGVES. The LCN-type CS-alpha/beta domain occupies 21–83; the sequence is RDGYIALPHN…VPIRVPGRCH (63 aa). Cystine bridges form between cysteine 31-cysteine 82, cysteine 35-cysteine 55, cysteine 41-cysteine 65, and cysteine 45-cysteine 67.

Belongs to the long (4 C-C) scorpion toxin superfamily. Sodium channel inhibitor family. Alpha subfamily. As to expression, expressed by the venom gland.

The protein resides in the secreted. Functionally, alpha toxins bind voltage-independently at site-3 of sodium channels (Nav) and inhibit the inactivation of the activated channels, thereby blocking neuronal transmission. In Olivierus martensii (Manchurian scorpion), this protein is Toxin BmKaTx10.